Consider the following 307-residue polypeptide: Porphobilinogen deaminase (307 aa).

Cys241 carries the post-translational modification S-(dipyrrolylmethanemethyl)cysteine.

The protein belongs to the HMBS family. As to quaternary structure, monomer. Dipyrromethane serves as cofactor.

It catalyses the reaction 4 porphobilinogen + H2O = hydroxymethylbilane + 4 NH4(+). The protein operates within porphyrin-containing compound metabolism; protoporphyrin-IX biosynthesis; coproporphyrinogen-III from 5-aminolevulinate: step 2/4. Tetrapolymerization of the monopyrrole PBG into the hydroxymethylbilane pre-uroporphyrinogen in several discrete steps. This Coxiella burnetii (strain CbuK_Q154) (Coxiella burnetii (strain Q154)) protein is Porphobilinogen deaminase.